Reading from the N-terminus, the 1722-residue chain is Signal-induced proliferation-associated 1-like protein 2 (1722 aa).

The segment covering Met-1 to His-12 has biased composition (basic and acidic residues). Disordered regions lie at residues Met-1 to Gln-29 and Asn-42 to Pro-72. The segment covering Met-45–Ser-56 has biased composition (polar residues). Ser-148 bears the Phosphoserine mark. Polar residues predominate over residues Gly-360–Cys-377. Positions Gly-360–Lys-401 are disordered. Phosphoserine is present on residues Ser-379 and Ser-383. A compositionally biased stretch (basic and acidic residues) spans Ser-383–Lys-401. In terms of domain architecture, Rap-GAP spans Leu-595–Leu-812. In terms of domain architecture, PDZ spans Glu-950 to Asp-1026. Phosphoserine is present on Ser-1029. 2 disordered regions span residues His-1067–Gly-1245 and Glu-1330–Ser-1360. Low complexity-rich tracts occupy residues Gln-1093 to Ala-1102 and Ser-1119 to Pro-1130. Basic and acidic residues-rich tracts occupy residues Asp-1164–Trp-1183 and Tyr-1194–Asp-1217. Over residues Ser-1219–Asn-1236 the composition is skewed to low complexity. Ser-1244 is modified (phosphoserine). Positions Ser-1337–Ser-1360 are enriched in low complexity. A phosphoserine mark is found at Ser-1461, Ser-1472, Ser-1478, Ser-1488, Ser-1549, Ser-1552, and Ser-1591. A coiled-coil region spans residues Leu-1654–Glu-1712.

This chain is Signal-induced proliferation-associated 1-like protein 2 (SIPA1L2), found in Homo sapiens (Human).